A 493-amino-acid polypeptide reads, in one-letter code: Glutamyl-tRNA(Gln) amidotransferase subunit A (493 aa).

Active-site charge relay system residues include K79 and S159. S183 serves as the catalytic Acyl-ester intermediate.

The protein belongs to the amidase family. GatA subfamily. As to quaternary structure, heterotrimer of A, B and C subunits.

It carries out the reaction L-glutamyl-tRNA(Gln) + L-glutamine + ATP + H2O = L-glutaminyl-tRNA(Gln) + L-glutamate + ADP + phosphate + H(+). In terms of biological role, allows the formation of correctly charged Gln-tRNA(Gln) through the transamidation of misacylated Glu-tRNA(Gln) in organisms which lack glutaminyl-tRNA synthetase. The reaction takes place in the presence of glutamine and ATP through an activated gamma-phospho-Glu-tRNA(Gln). The sequence is that of Glutamyl-tRNA(Gln) amidotransferase subunit A from Agrobacterium fabrum (strain C58 / ATCC 33970) (Agrobacterium tumefaciens (strain C58)).